The sequence spans 108 residues: UPF0060 membrane protein YE2027 (108 aa).

The next 4 membrane-spanning stretches (helical) occupy residues 6–26 (LLFF…YLWL), 29–49 (GASM…VWLL), 59–79 (VYAA…RVVD), and 85–105 (LFDW…VAGW).

Belongs to the UPF0060 family.

The protein localises to the cell inner membrane. The polypeptide is UPF0060 membrane protein YE2027 (Yersinia enterocolitica serotype O:8 / biotype 1B (strain NCTC 13174 / 8081)).